The chain runs to 132 residues: MRMLLHLSILTLACVWTFAVEIPMHTVVKETLIQLSTHRALLTSNETVRLPVPTHKNHQLCIGEIFRGLDILKNQTVRGGTVETLFQNLSLIKKYIDRQKEKCGEERRRTRQFLDYLQEFLGVMGTEWTMEH.

Residues 1-19 (MRMLLHLSILTLACVWTFA) form the signal peptide. Residues asparagine 45, asparagine 74, and asparagine 88 are each glycosylated (N-linked (GlcNAc...) asparagine).

The protein belongs to the IL-5 family. Homodimer; disulfide-linked. Interacts with IL5RA. Interacts with CSF2RB.

The protein resides in the secreted. Its function is as follows. Homodimeric cytokine expressed predominantly by T-lymphocytes and NK cells that plays an important role in the survival, differentiation, and chemotaxis of eosinophils. Also acts on activated and resting B-cells to induce immunoglobulin production, growth, and differentiation. Mechanistically, exerts its biological effects through a receptor composed of IL5RA subunit and the cytokine receptor common subunit beta/CSF2RB. Binding to the receptor leads to activation of various kinases including LYN, SYK and JAK2 and thereby propagates signals through the RAS-MAPK and JAK-STAT5 pathways respectively. The chain is Interleukin-5 (IL5) from Sigmodon hispidus (Hispid cotton rat).